We begin with the raw amino-acid sequence, 104 residues long: Transcription elongation factor A protein-like 9 (104 aa).

The tract at residues 1–48 (MKPCQKMEGNLEKEDEPKPEEEPKPEEKPEEGQEPEEEEKSEETFRER) is disordered. The span at 9 to 31 (GNLEKEDEPKPEEEPKPEEKPEE) shows a compositional bias: basic and acidic residues. Residues 32–41 (GQEPEEEEKS) show a composition bias toward acidic residues.

It belongs to the TFS-II family. TFA subfamily.

It localises to the nucleus. May be involved in transcriptional regulation. This chain is Transcription elongation factor A protein-like 9 (Tceal9), found in Mus musculus (Mouse).